Consider the following 168-residue polypeptide: Phosphopantetheine adenylyltransferase (168 aa).

Threonine 9 is a substrate binding site. Residues 9–10 (TF) and histidine 17 contribute to the ATP site. Lysine 41, leucine 74, and arginine 88 together coordinate substrate. Residues 89–91 (GLR), glutamate 99, and 124–130 (LQPIASR) each bind ATP.

The protein belongs to the bacterial CoaD family. In terms of assembly, homohexamer. The cofactor is Mg(2+).

The protein resides in the cytoplasm. The enzyme catalyses (R)-4'-phosphopantetheine + ATP + H(+) = 3'-dephospho-CoA + diphosphate. Its pathway is cofactor biosynthesis; coenzyme A biosynthesis; CoA from (R)-pantothenate: step 4/5. Reversibly transfers an adenylyl group from ATP to 4'-phosphopantetheine, yielding dephospho-CoA (dPCoA) and pyrophosphate. The protein is Phosphopantetheine adenylyltransferase of Sphingopyxis alaskensis (strain DSM 13593 / LMG 18877 / RB2256) (Sphingomonas alaskensis).